A 362-amino-acid chain; its full sequence is MPGKQSEDRPMEVAAVEDGGDEGLGGLTVEELQQGQEAALALEDMMALSAQTLVRTEVEELYEEVRPLGQGRFGRVLLVTHRQKGTPLALKQLPKHSTSLRSFLYEFCVGLSLGTHPAIVAAYGIGIESANSYSFLTEPVLHGDLITFIKPKVGLPQPAVQRCAAQLASALEHIHSHGLVYRDLKPENVLVCDPACQRVKLTDFGHTRPRGTMLRLTGPPIPYTAPELCAPPPLPEGLPIQPALDAWALGVLIFCLLTGYFPWDQPLVEVDPFFEDFLIWQASGQPQDRPQPWYNLSPAADTLLWGLLDPHPRKRNPVSSIKSYLGQPWKQREEGAEELTKELREDGSRGGQEAAKGEQPAC.

Residues 1 to 11 are compositionally biased toward basic and acidic residues; it reads MPGKQSEDRPM. A disordered region spans residues 1-20; sequence MPGKQSEDRPMEVAAVEDGG. Positions 62–330 constitute a Protein kinase domain; it reads YEEVRPLGQG…IKSYLGQPWK (269 aa). Residues 68 to 76 and Lys-91 contribute to the ATP site; that span reads LGQGRFGRV. Catalysis depends on Asp-183, which acts as the Proton acceptor. Positions 317 to 362 are disordered; the sequence is PVSSIKSYLGQPWKQREEGAEELTKELREDGSRGGQEAAKGEQPAC. Basic and acidic residues predominate over residues 330–348; that stretch reads KQREEGAEELTKELREDGS.

Belongs to the protein kinase superfamily. Ser/Thr protein kinase family. STKL subfamily.

The enzyme catalyses L-seryl-[protein] + ATP = O-phospho-L-seryl-[protein] + ADP + H(+). It carries out the reaction L-threonyl-[protein] + ATP = O-phospho-L-threonyl-[protein] + ADP + H(+). This is Serine/threonine-protein kinase SBK2 (Sbk2) from Rattus norvegicus (Rat).